A 356-amino-acid chain; its full sequence is Metacaspase-1 (356 aa).

A disordered region spans residues M1–G47. Catalysis depends on residues H147 and C203.

The protein belongs to the peptidase C14B family.

Functionally, involved in cell death (apoptosis). In Ajellomyces capsulatus (strain NAm1 / WU24) (Darling's disease fungus), this protein is Metacaspase-1 (MCA1).